The primary structure comprises 446 residues: RUN domain-containing protein 3A (446 aa).

Residues 1-298 (MEASFVQTTM…LQLQLEEAAA (298 aa)) form an interaction with RAP2A region. The RUN domain occupies 52–189 (DDSSEEFVNF…IDFSFCLKGE (138 aa)). T215 carries the phosphothreonine modification. The segment at 216 to 239 (DEEERHSAESSTSEDNSPEHPYLP) is disordered. Residue S232 is modified to Phosphoserine. Positions 267-322 (YLEELVRLRESQLKDLEAENRRLQLQLEEAAAQNQREKRELEGVILELQEQLTGLI) form a coiled coil. The segment covering 372–384 (PLSAEASLSSDSQ) has biased composition (polar residues). The interval 372 to 403 (PLSAEASLSSDSQRLGEAKRDEEPWGPIGKDP) is disordered. Over residues 385–394 (RLGEAKRDEE) the composition is skewed to basic and acidic residues. A phosphoserine mark is found at S416 and S419.

This sequence belongs to the RUNDC3 family. Interacts with the GTP-bound form of RAP2A. In terms of tissue distribution, brain.

Its function is as follows. May act as an effector of RAP2A in neuronal cells. The sequence is that of RUN domain-containing protein 3A (Rundc3a) from Mus musculus (Mouse).